A 102-amino-acid polypeptide reads, in one-letter code: MTQSARVKLTSINLLKLDGVCGIIMDIGKRTGVRIKGPTPLPVKKLHIATRKSPCGSGTETYEKWEMRMHRRIIDISADDKTIRRLIDLKIPDDVHLELFLT.

Belongs to the universal ribosomal protein uS10 family. In terms of assembly, part of the 30S ribosomal subunit.

Functionally, involved in the binding of tRNA to the ribosomes. The protein is Small ribosomal subunit protein uS10 of Cenarchaeum symbiosum (strain A).